The primary structure comprises 417 residues: Serine hydroxymethyltransferase (417 aa).

Residues leucine 122 and 126-128 (GHL) contribute to the (6S)-5,6,7,8-tetrahydrofolate site. Lysine 230 is subject to N6-(pyridoxal phosphate)lysine. 355-357 (SPF) contacts (6S)-5,6,7,8-tetrahydrofolate.

Belongs to the SHMT family. In terms of assembly, homodimer. Requires pyridoxal 5'-phosphate as cofactor.

Its subcellular location is the cytoplasm. It carries out the reaction (6R)-5,10-methylene-5,6,7,8-tetrahydrofolate + glycine + H2O = (6S)-5,6,7,8-tetrahydrofolate + L-serine. The protein operates within one-carbon metabolism; tetrahydrofolate interconversion. It participates in amino-acid biosynthesis; glycine biosynthesis; glycine from L-serine: step 1/1. In terms of biological role, catalyzes the reversible interconversion of serine and glycine with tetrahydrofolate (THF) serving as the one-carbon carrier. This reaction serves as the major source of one-carbon groups required for the biosynthesis of purines, thymidylate, methionine, and other important biomolecules. Also exhibits THF-independent aldolase activity toward beta-hydroxyamino acids, producing glycine and aldehydes, via a retro-aldol mechanism. The chain is Serine hydroxymethyltransferase from Francisella tularensis subsp. tularensis (strain FSC 198).